The chain runs to 158 residues: Ecotin (158 aa).

A signal peptide spans 1–21; it reads MRLLPLASVTLLSVLCAQAFA. A disulfide bridge connects residues Cys67 and Cys104.

Belongs to the protease inhibitor I11 (ecotin) family. Homodimer.

The protein resides in the periplasm. General inhibitor of family S1 serine proteases. In Pseudomonas fluorescens (strain ATCC BAA-477 / NRRL B-23932 / Pf-5), this protein is Ecotin.